Consider the following 1483-residue polypeptide: Cystic fibrosis transmembrane conductance regulator (1483 aa).

The Cytoplasmic segment spans residues 1–77; that stretch reads MQRSPLEKAS…KLINALRRCF (77 aa). Residues 78 to 98 form a helical membrane-spanning segment; it reads FWKFMFYGILLYLGEVTKAVQ. In terms of domain architecture, ABC transmembrane type-1 1 spans 81–365; sequence FMFYGILLYL…WAVQTWYDSL (285 aa). The Extracellular segment spans residues 99-122; that stretch reads PLLLGRIIASYDPDNKVERSIAIY. The helical transmembrane segment at 123–146 threads the bilayer; it reads LGIGLCLLFVVRTLLLHPAIFGLH. The Cytoplasmic segment spans residues 147-195; sequence HIGMQMRIAMFSLIYKKTLKLSSRVLDKISIGQLISLLSNNLNKFDEGL. A helical membrane pass occupies residues 196–216; the sequence is ALAHFVWIVPLQVTLLMGLLW. Over 217 to 222 the chain is Extracellular; sequence ELLQAS. A helical membrane pass occupies residues 223–243; sequence AFCGLAFLIIVAFYQAGLGRM. The Cytoplasmic segment spans residues 244–298; that stretch reads MMKYRDKRGGKINERLVITSEMIENIQSVKAYCWEEAMEKMIENLRQTELKLTRK. Residues 299–319 form a helical membrane-spanning segment; the sequence is AAYVRYCNSSAFFFSGFFVVF. Over 320-339 the chain is Extracellular; the sequence is LSVLPYALMKGIILRKIFTT. A helical transmembrane segment spans residues 340–358; the sequence is ISFCIVLRMAVTRQFPWAV. Over 359–859 the chain is Cytoplasmic; it reads QTWYDSLGAI…YLRYITIHKS (501 aa). ATP contacts are provided by residues W401, S434, 458-465, and Q493; that span reads GSTGAGKT. One can recognise an ABC transporter 1 domain in the interval 423-646; it reads NGDNSLFFSN…RPDFSSKLMG (224 aa). The S-palmitoyl cysteine moiety is linked to residue C524. Phosphoserine is present on residues S549 and S660. Residues 654-832 form a disordered R region region; that stretch reads SAERRNSILT…EEINEEDLKE (179 aa). The residue at position 670 (S670) is a Phosphoserine; by PKA. S686 bears the Phosphoserine mark. K688 participates in a covalent cross-link: Glycyl lysine isopeptide (Lys-Gly) (interchain with G-Cter in ubiquitin). Phosphoserine occurs at positions 700 and 712. The residue at position 717 (T717) is a Phosphothreonine. A phosphoserine mark is found at S737, S768, S791, S796, and S814. A helical membrane pass occupies residues 860–880; it reads LIFVLIWCLIIFLAEVAVSLV. The ABC transmembrane type-1 2 domain maps to 860–1157; sequence LIFVLIWCLI…AVNSSIDVDS (298 aa). The Extracellular portion of the chain corresponds to 881-920; the sequence is FLLLFEKSPRQDTGNVTKSSNNSSYGVIITNTSSYYIIYI. N-linked (GlcNAc...) asparagine glycans are attached at residues N895, N901, N902, and N911. The discontinuously helical transmembrane segment at 921 to 941 threads the bilayer; sequence YVGVADTLLALGLLRGLPLVH. Residues 942–992 lie on the Cytoplasmic side of the membrane; that stretch reads TLITASKILHHKMLHSVLQAPMSTLNTLKAGGILNRFSKDIAILDDLLPLT. Residues 993–1013 form a helical membrane-spanning segment; the sequence is IFDFIQLILIVIGAVIVVSVL. The Extracellular portion of the chain corresponds to 1014-1015; it reads EP. The helical transmembrane segment at 1016 to 1036 threads the bilayer; that stretch reads YIFLATVPVIIAFVMLRAYFL. Topologically, residues 1037–1097 are cytoplasmic; sequence HTSQQLKQLE…TANWFLYLST (61 aa). A helical transmembrane segment spans residues 1098-1118; that stretch reads LRWFQMRIEMIFVIFFIAVTF. Over 1119-1132 the chain is Extracellular; the sequence is ISILTTGDGEGRVG. A helical membrane pass occupies residues 1133 to 1153; that stretch reads IILTLAMNIMNTLQWAVNSSI. Over 1154–1483 the chain is Cytoplasmic; the sequence is DVDSLMRSVS…TEEEVQETRL (330 aa). Positions 1213-1446 constitute an ABC transporter 2 domain; it reads MTVKDLTAKY…KSLFRQAISN (234 aa). Residues Y1222 and 1247-1254 each bind ATP; that span reads GRTGSGKS. Positions 1389–1483 are interaction with GORASP2; sequence RTIKQAFADC…TEEEVQETRL (95 aa). A lipid anchor (S-palmitoyl cysteine) is attached at C1398. Phosphoserine occurs at positions 1447 and 1459. A compositionally biased stretch (basic residues) spans 1455–1465; sequence HRNSSKHKSRS. Residues 1455–1483 form a disordered region; the sequence is HRNSSKHKSRSKIAALKEETEEEVQETRL. Positions 1473-1483 are enriched in acidic residues; sequence ETEEEVQETRL. Positions 1481 to 1483 match the PDZ-binding motif; that stretch reads TRL.

Belongs to the ABC transporter superfamily. ABCC family. CFTR transporter (TC 3.A.1.202) subfamily. In terms of assembly, monomer; does not require oligomerization for channel activity. May form oligomers in the membrane. Interacts with SLC26A3, SLC26A6 and NHERF1. Interacts with SHANK2. Interacts with MYO6. Interacts (via C-terminus) with GOPC (via PDZ domain); this promotes CFTR internalization and thereby decreases channel activity. Interacts with SLC4A7 through NHERF1. Found in a complex with MYO5B and RAB11A. Interacts with ANO1. Interacts with SLC26A8. Interacts with AHCYL1; the interaction increases CFTR activity. Interacts with CSE1L. The core-glycosylated form interacts with GORASP2 (via PDZ GRASP-type 1 domain) in respone to ER stress. Interacts with MARCHF2; the interaction leads to CFTR ubiqtuitination and degradation. Interacts with ADGRG2. In terms of processing, N-glycosylated. Post-translationally, phosphorylated; cAMP treatment promotes phosphorylation and activates the channel. Dephosphorylation decreases the ATPase activity (in vitro). Phosphorylation at PKA sites activates the channel. Phosphorylation at PKC sites enhances the response to phosphorylation by PKA. Phosphorylated by AMPK; this inhibits channel activity. Ubiquitinated, leading to its degradation in the lysosome. Deubiquitination by USP10 in early endosomes enhances its endocytic recycling to the cell membrane. Ubiquitinated by RNF185 during ER stress. Ubiquitinated by MARCHF2.

The protein localises to the apical cell membrane. The protein resides in the early endosome membrane. It is found in the cell membrane. It localises to the recycling endosome membrane. Its subcellular location is the endoplasmic reticulum membrane. The protein localises to the nucleus. It carries out the reaction ATP + H2O + closed Cl(-) channel = ADP + phosphate + open Cl(-) channel.. It catalyses the reaction chloride(in) = chloride(out). The enzyme catalyses hydrogencarbonate(in) = hydrogencarbonate(out). The catalysed reaction is ATP + H2O = ADP + phosphate + H(+). Functionally, epithelial ion channel that plays an important role in the regulation of epithelial ion and water transport and fluid homeostasis. Mediates the transport of chloride ions across the cell membrane. The ion channel is also permeable to HCO(3)(-); selectivity depends on the extracellular chloride concentration. Exerts its function also by modulating the activity of other ion channels and transporters. Contributes to the regulation of the pH and the ion content of the epithelial fluid layer. Modulates the activity of the epithelial sodium channel (ENaC) complex, in part by regulating the cell surface expression of the ENaC complex. May regulate bicarbonate secretion and salvage in epithelial cells by regulating the transporter SLC4A7. Can inhibit the chloride channel activity of ANO1. Plays a role in the chloride and bicarbonate homeostasis during sperm epididymal maturation and capacitation. This is Cystic fibrosis transmembrane conductance regulator from Atelerix albiventris (Middle-African hedgehog).